The chain runs to 242 residues: uncharacterized protein (242 aa).

8 to 15 (TGASGGIG) is an NADP(+) binding site. S137 is a binding site for substrate. The active-site Proton acceptor is the Y150.

The protein belongs to the short-chain dehydrogenases/reductases (SDR) family.

This is an uncharacterized protein from Bacillus subtilis (strain 168).